The chain runs to 108 residues: Large ribosomal subunit protein uL24 (108 aa).

Belongs to the universal ribosomal protein uL24 family. As to quaternary structure, part of the 50S ribosomal subunit.

In terms of biological role, one of two assembly initiator proteins, it binds directly to the 5'-end of the 23S rRNA, where it nucleates assembly of the 50S subunit. Functionally, one of the proteins that surrounds the polypeptide exit tunnel on the outside of the subunit. This chain is Large ribosomal subunit protein uL24, found in Geotalea daltonii (strain DSM 22248 / JCM 15807 / FRC-32) (Geobacter daltonii).